The primary structure comprises 868 residues: Paladin (868 aa).

G2 carries N-myristoyl glycine lipidation.

The protein belongs to the paladin family.

The protein localises to the cytoplasm. It is found in the cytosol. The chain is Paladin (PALD1) from Gallus gallus (Chicken).